The following is a 449-amino-acid chain: Sulfite exporter TauE/SafE family protein 5 (449 aa).

A run of 12 helical transmembrane segments spans residues 1-21 (MKTL…NANQ), 57-77 (AIIM…AGGI), 78-98 (GGGG…LKTA), 101-121 (FSAF…LFGG), 127-147 (YDLA…GVIC), 150-170 (VLPE…SSLK), 224-244 (IPWT…VIYL), 259-279 (PCGV…LIFT), 315-335 (AMSF…GMLI), 353-373 (TSFM…LLGM), 378-398 (TAYV…VLVQ), and 409-429 (IIVF…TSFG).

The protein belongs to the 4-toluene sulfonate uptake permease (TSUP) (TC 2.A.102) family.

Its subcellular location is the membrane. In Arabidopsis thaliana (Mouse-ear cress), this protein is Sulfite exporter TauE/SafE family protein 5.